Reading from the N-terminus, the 86-residue chain is SEED MATURATION PROTEIN 1 (86 aa).

Residues Arg52 to Arg86 form a disordered region. Polar residues predominate over residues Ser60–Gln70. Residues Arg71–Arg86 show a composition bias toward basic and acidic residues.

It belongs to the LEA type 3 family.

In terms of biological role, protein chaperone involved in seed maturation and dormancy maintenance after high temperature fluctuation (e.g. secondary dormancy after 3 days at 40 degrees Celsius), probably by protecting heat labile proteins required for secondary dormancy (e.g. G6PDH, HOP3, SR45, ECP63, SCL33, RPL32B, ChlADR1, MSBP1, MBF1B, At3g01690, At1g15280, At1g15290, At2g31410, At1g11630, At1g65090, EMB2279, EMB1674 and RPL35C). This is SEED MATURATION PROTEIN 1 from Arabidopsis thaliana (Mouse-ear cress).